A 524-amino-acid chain; its full sequence is Phosphoenolpyruvate carboxykinase (ATP) (524 aa).

Residues Arg52, Tyr188, and Lys194 each contribute to the substrate site. Residues Lys194, His213, and 229–237 (GLSGTGKTT) each bind ATP. Mn(2+)-binding residues include Lys194 and His213. Asp250 provides a ligand contact to Mn(2+). 3 residues coordinate ATP: Glu278, Arg314, and Thr439. Arg314 is a binding site for substrate.

Belongs to the phosphoenolpyruvate carboxykinase (ATP) family. Mn(2+) is required as a cofactor.

Its subcellular location is the cytoplasm. It catalyses the reaction oxaloacetate + ATP = phosphoenolpyruvate + ADP + CO2. It functions in the pathway carbohydrate biosynthesis; gluconeogenesis. In terms of biological role, involved in the gluconeogenesis. Catalyzes the conversion of oxaloacetate (OAA) to phosphoenolpyruvate (PEP) through direct phosphoryl transfer between the nucleoside triphosphate and OAA. In Campylobacter lari (strain RM2100 / D67 / ATCC BAA-1060), this protein is Phosphoenolpyruvate carboxykinase (ATP).